A 570-amino-acid polypeptide reads, in one-letter code: Putative pyruvate decarboxylase C3G9.11c (570 aa).

Positions 30 and 119 each coordinate pyruvate. Thiamine diphosphate contacts are provided by residues Thr396 and 419–421 (GSI). Asp451 serves as a coordination point for Mg(2+). Residues 452–453 (GS) and 478–483 (NKGYTI) each bind thiamine diphosphate. Mg(2+) is bound by residues Asn478 and Gly480. Glu484 serves as a coordination point for pyruvate.

The protein belongs to the TPP enzyme family. As to quaternary structure, homotetramer. Requires Mg(2+) as cofactor. It depends on thiamine diphosphate as a cofactor.

The protein resides in the cytoplasm. It localises to the nucleus. The enzyme catalyses a 2-oxocarboxylate + H(+) = an aldehyde + CO2. It catalyses the reaction pyruvate + H(+) = acetaldehyde + CO2. The protein is Putative pyruvate decarboxylase C3G9.11c of Schizosaccharomyces pombe (strain 972 / ATCC 24843) (Fission yeast).